The sequence spans 68 residues: Large ribosomal subunit protein uL29 (68 aa).

It belongs to the universal ribosomal protein uL29 family.

The polypeptide is Large ribosomal subunit protein uL29 (Leuconostoc citreum (strain KM20)).